Consider the following 350-residue polypeptide: GTPase Obg (350 aa).

The 159-residue stretch at 1 to 159 folds into the Obg domain; that stretch reads MKLVDEAEIL…RLLKLELKLL (159 aa). The OBG-type G domain maps to 160-337; the sequence is ADVGLLGFPN…IMKDVMAFFD (178 aa). GTP-binding positions include 166–173, 191–195, 213–216, 287–290, and 318–320; these read GFPNAGKS, FTTLY, DVPG, NKAD, and SAL. The Mg(2+) site is built by Ser-173 and Thr-193.

The protein belongs to the TRAFAC class OBG-HflX-like GTPase superfamily. OBG GTPase family. Monomer. The cofactor is Mg(2+).

It localises to the cytoplasm. Functionally, an essential GTPase which binds GTP, GDP and possibly (p)ppGpp with moderate affinity, with high nucleotide exchange rates and a fairly low GTP hydrolysis rate. Plays a role in control of the cell cycle, stress response, ribosome biogenesis and in those bacteria that undergo differentiation, in morphogenesis control. The chain is GTPase Obg from Xanthomonas campestris pv. campestris (strain 8004).